We begin with the raw amino-acid sequence, 141 residues long: Decarboxylase CPUR_05434 (141 aa).

The region spanning 26–121 (EGMSEEAYRN…MHDHEMFADT (96 aa)) is the EthD domain.

It belongs to the tpcK family.

It catalyses the reaction atrochrysone carboxylate + H(+) = atrochrysone + CO2. Functionally, decarboxylase; part of the ergochrome gene cluster responsible for the typical purple-black color of the ergot sclerotia. The ergochrome gene cluster produces several ergot pigments including the yellow ergochrome secalonic acid and its derivatives, as well as the red anthraquinones endocrocin and clavorubin. The pathway begins with the synthesis of atrochrysone thioester by the polyketide synthase (PKS) CPUR_05437. The atrochrysone carboxyl ACP thioesterase CPUR_05436 then breaks the thioester bond and releases the atrochrysone carboxylic acid from CPUR_05437. The decarboxylase CPUR_05434 then catalyzes the concerted decarboxylation-elimination required to convert atochrysone carboxylic acid into emodin anthrone, which is further oxidized to emodin by the anthrone oxygenase CPUR_05435. Emodin is further modified to yield monodictyphenone via several steps involving CPUR_05427, CPUR_05428, CPUR_05429 and CPUR_05430. The short chain dehydrogenase/reductase CPUR_05418 then catalyzes the C-5 ketoreduction to give the xanthone skeleton of the monomeric units. Ergochromes formation requires further dimerization steps of different xanthone units, probably catalyzed by the cytochrome P450 monooxygenase CPUR_05419. CPUR_05425, CPUR_05426 and CPUR_05431 are unique to Claviceps, thus it is likely that they are involved in further modification of xanthone units or in their dimerization. The yellow ergochromes and the red anthraquinone pigments endocrocin and clavorubin are products from the same PKS derived precursors and the latter are likely shunt products in the pathway of xanthone biosynthesis. It is proposed that atrochrysone carboxylic acid released from the PKS CPUR_05437 can also be converted to endocrocin anthrone which is further oxidized into endocrocin by CPUR_05435. Endocrocin could be then modified to clavorubin, possibly by CPUR_05423 and CPUR_05431. Clavorubin is the principal anthraquinone metabolite produced by the cluster with a much higher yield compared to endocrocin. In Claviceps purpurea (strain 20.1) (Ergot fungus), this protein is Decarboxylase CPUR_05434.